The following is a 227-amino-acid chain: UPF0173 metal-dependent hydrolase BPUM_2573 (227 aa).

The protein belongs to the UPF0173 family.

This chain is UPF0173 metal-dependent hydrolase BPUM_2573, found in Bacillus pumilus (strain SAFR-032).